Reading from the N-terminus, the 811-residue chain is MRRSGSKESTIVYSALSLAQAGRGPEALALLEPLKSTPINSLELLDIIQAVYDDQKKGEESFVFWEKFLQTYGKQEKNLLAYFKASIRIKSLSHQRKAAVELQKNFPSRKHTLWVISSLYLLSKKSENEVEQRLLKALAEKTAKLIFEKPTGYIDSCEEFHLYLDVLLLVGDKDRALDALIHQDADRFVDADADLLLRKLELLASCARWDSLFTFSLSLFQTGNTDWKVCKALLDSASNDDSKLVPLKDCILKALSTSSTKRNLHLLWIEASARFFPEEHESALLGYIKKLYMKPIVFEDLRPYLLKLNVDAQHRLLDAFKLADLGESNESQKVDKLYAEVLLLKIHFLLFESFTAESVVDYVRRCFVAFEKGLSLSKGLLPTDFTHGYEALLLAVHSLIYMWEGNKDLKPAEKQALIFDAICLLEKGITYSQHNFHLKLPLIRLYLLLDGGFPAAAKVYDTMSIKQIQNDTLDHYLLTRATTYYPSSVTSHYINSSLKIYGSNEFETPEMISMAYEDGAYSQIEDMRNFRSRLDHSTWKSISLVERARIHYLTAFKPPKQYLPKCSSPKDNRDLKVFADYGSDKLPTVEESLRNSPKPDTLWIHLTVIGHSLVQDSIVNGDFEKAVLSAKEMEVLCENNDLSKQLTSEEIVHMKLLIQLGLLSVKVKNGDYENSSFETIENLIESFDYENSTPLSQLTKYTEIINDLITCLNSFLYHVSATKKKEFTRQYQLLKNISSNKLGSISGITKHKKKAARKYVSELLSNSWLSNLSETQVPYDPKFAKQVGEGMIDSYIQTTDAVSKLPKFVKF.

The protein belongs to the MDM20/NAA25 family. In terms of assembly, component of the N-terminal acetyltransferase B (NatB) complex.

It is found in the cytoplasm. Non-catalytic subunit of the NatB N-terminal acetyltransferase, which catalyzes acetylation of the amino-terminal methionine residues of all proteins beginning with Met-Asp or Met-Glu and of some proteins beginning with Met-Asn or Met-Met. This Schizosaccharomyces pombe (strain 972 / ATCC 24843) (Fission yeast) protein is N-terminal acetyltransferase B complex subunit arm1 (arm1).